The following is a 191-amino-acid chain: Thiol:disulfide interchange protein TxlA (191 aa).

The helical transmembrane segment at 14-30 (ILVIAAALVLTILVVLG) threads the bilayer. A Thioredoxin domain is found at 27–148 (VVLGSRQPSA…LAANLDALVE (122 aa)). The cysteines at positions 69 and 72 are disulfide-linked. The span at 165–185 (SADLQPSRSSQTDPRSHSGQV) shows a compositional bias: polar residues. The segment at 165 to 191 (SADLQPSRSSQTDPRSHSGQVQDGVLD) is disordered.

Belongs to the thioredoxin family.

The protein localises to the cell membrane. In terms of biological role, required for disulfide bond formation in some proteins. Acts by transferring its disulfide bond to other proteins and is reduced in the process. In Synechococcus elongatus (strain ATCC 33912 / PCC 7942 / FACHB-805) (Anacystis nidulans R2), this protein is Thiol:disulfide interchange protein TxlA (txlA).